The sequence spans 475 residues: Ankyrin repeat, SAM and basic leucine zipper domain-containing protein 1 (475 aa).

Positions 1 to 24 (MAAAVQRGLPVAGGGESSESEDDG) are disordered. S17, S18, and S20 each carry phosphoserine. ANK repeat units lie at residues 45-74 (EKNE…SVES), 78-107 (YGWT…NASF), 110-144 (DKHT…DPNV), 148-177 (RLMT…EVNA), 181-210 (NGYT…NKML), and 214-243 (DGKT…PLEG). The SAM domain maps to 272–334 (SYAAFGDLEI…KILAALKELA (63 aa)).

In terms of assembly, interacts with DDX4, PIWIL1, RANBP9 and TDRD1.

The protein resides in the cytoplasm. In terms of biological role, plays a central role during spermatogenesis by repressing transposable elements and preventing their mobilization, which is essential for the germline integrity. Acts via the piRNA metabolic process, which mediates the repression of transposable elements during meiosis by forming complexes composed of piRNAs and Piwi proteins and governs the methylation and subsequent repression of transposons. Its association with pi-bodies suggests a participation in the primary piRNAs metabolic process. Required prior to the pachytene stage to facilitate the production of multiple types of piRNAs, including those associated with repeats involved in the regulation of retrotransposons. May act by mediating protein-protein interactions during germ cell maturation. This chain is Ankyrin repeat, SAM and basic leucine zipper domain-containing protein 1 (ASZ1), found in Loxodonta africana (African elephant).